The sequence spans 82 residues: uncharacterized protein (82 aa).

The interval 1 to 20 is disordered; that stretch reads MMNLSPPFKSPSGSSRAGRR.

This is an uncharacterized protein from Archaeoglobus fulgidus (strain ATCC 49558 / DSM 4304 / JCM 9628 / NBRC 100126 / VC-16).